The primary structure comprises 311 residues: GTP cyclohydrolase FolE2 (311 aa).

Belongs to the GTP cyclohydrolase IV family.

It carries out the reaction GTP + H2O = 7,8-dihydroneopterin 3'-triphosphate + formate + H(+). It functions in the pathway cofactor biosynthesis; 7,8-dihydroneopterin triphosphate biosynthesis; 7,8-dihydroneopterin triphosphate from GTP: step 1/1. In terms of biological role, converts GTP to 7,8-dihydroneopterin triphosphate. The polypeptide is GTP cyclohydrolase FolE2 (Xanthomonas campestris pv. campestris (strain B100)).